A 403-amino-acid chain; its full sequence is Histidine--tRNA ligase (403 aa).

It belongs to the class-II aminoacyl-tRNA synthetase family. In terms of assembly, homodimer.

Its subcellular location is the cytoplasm. It carries out the reaction tRNA(His) + L-histidine + ATP = L-histidyl-tRNA(His) + AMP + diphosphate + H(+). This is Histidine--tRNA ligase (hisS) from Aquifex aeolicus (strain VF5).